A 530-amino-acid chain; its full sequence is Glutamate--cysteine ligase (530 aa).

It belongs to the glutamate--cysteine ligase type 1 family. Type 1 subfamily.

The enzyme catalyses L-cysteine + L-glutamate + ATP = gamma-L-glutamyl-L-cysteine + ADP + phosphate + H(+). It functions in the pathway sulfur metabolism; glutathione biosynthesis; glutathione from L-cysteine and L-glutamate: step 1/2. This chain is Glutamate--cysteine ligase, found in Pseudomonas entomophila (strain L48).